A 1479-amino-acid polypeptide reads, in one-letter code: C-type mannose receptor 2 (1479 aa).

A signal peptide spans 1-30 (MGPGRPAPAPWPRHLLRCVLLLGCLHLGRP). At 31–1414 (GAPGDAALPE…PSALPENPAA (1384 aa)) the chain is on the extracellular side. Residues 41–167 (PNVFLIFSHG…WRIYGSEEDL (127 aa)) enclose the Ricin B-type lectin domain. Residues cysteine 54 and cysteine 68 are joined by a disulfide bond. N-linked (GlcNAc...) (complex) asparagine glycosylation is present at asparagine 69. Cysteines 93 and 112 form a disulfide. Residue asparagine 140 is glycosylated (N-linked (GlcNAc...) asparagine). One can recognise a Fibronectin type-II domain in the interval 182-230 (SHGKPCTIPFKYDNQWFHGCTSTGREDGHLWCATTQDYGKDERWGFCPI). 4 disulfides stabilise this stretch: cysteine 187-cysteine 213, cysteine 201-cysteine 228, cysteine 266-cysteine 359, and cysteine 335-cysteine 351. The C-type lectin 1 domain maps to 244 to 360 (LTDSCYQFNF…CSIALPYVCK (117 aa)). N-linked (GlcNAc...) asparagine glycosylation is present at asparagine 364. C-type lectin domains are found at residues 389–505 (FQGH…SICK), 528–644 (HSPS…RYIC), 678–809 (KLRY…WICK), and 832–951 (FQEA…YICK). 2 cysteine pairs are disulfide-bonded: cysteine 410–cysteine 504 and cysteine 481–cysteine 496. N-linked (GlcNAc...) asparagine glycosylation occurs at asparagine 588. Disulfide bonds link cysteine 618–cysteine 635, cysteine 704–cysteine 808, cysteine 785–cysteine 800, cysteine 853–cysteine 950, and cysteine 927–cysteine 942. Residues asparagine 954 and asparagine 1029 are each glycosylated (N-linked (GlcNAc...) asparagine). C-type lectin domains are found at residues 979 to 1107 (FLNK…GFIC), 1132 to 1243 (YLNG…GAVC), and 1273 to 1393 (FREH…GVVC). Residues cysteine 1078 and cysteine 1098 are joined by a disulfide bond. Residue lysine 1142 forms a Glycyl lysine isopeptide (Lys-Gly) (interchain with G-Cter in SUMO1) linkage. Cysteine 1220 and cysteine 1234 are joined by a disulfide. Asparagine 1350 is a glycosylation site (N-linked (GlcNAc...) asparagine). Cysteine 1369 and cysteine 1384 are oxidised to a cystine. Residues 1415–1435 (LVVVLMAVLLLLALLTAALIL) form a helical membrane-spanning segment. The Cytoplasmic segment spans residues 1436–1479 (YRRRQSIERGAFEGARYSRSSSSPTEATEKNILVSDMEMNEQQE). Residues 1450 to 1479 (ARYSRSSSSPTEATEKNILVSDMEMNEQQE) form a disordered region.

As to quaternary structure, interacts with C-terminal region of type I collagen/COL1A1. Interacts directly with PLAUR/UPAR and PLAU/pro-UPA to form a tri-molecular complex. Interacts with collagen V. In terms of processing, N-glycosylated. Ubiquitous with low expression in brain, placenta, lung, kidney, pancreas, spleen, thymus and colon. Expressed in endothelial cells, fibroblasts and macrophages. Highly expressed in fetal lung and kidney.

The protein resides in the membrane. Its function is as follows. May play a role as endocytotic lectin receptor displaying calcium-dependent lectin activity. Internalizes glycosylated ligands from the extracellular space for release in an endosomal compartment via clathrin-mediated endocytosis. May be involved in plasminogen activation system controlling the extracellular level of PLAUR/PLAU, and thus may regulate protease activity at the cell surface. May contribute to cellular uptake, remodeling and degradation of extracellular collagen matrices. May play a role during cancer progression as well as in other chronic tissue destructive diseases acting on collagen turnover. May participate in remodeling of extracellular matrix cooperating with the matrix metalloproteinases (MMPs). The chain is C-type mannose receptor 2 (MRC2) from Homo sapiens (Human).